Consider the following 229-residue polypeptide: Large ribosomal subunit protein uL1 (229 aa).

It belongs to the universal ribosomal protein uL1 family. Part of the 50S ribosomal subunit.

In terms of biological role, binds directly to 23S rRNA. The L1 stalk is quite mobile in the ribosome, and is involved in E site tRNA release. Protein L1 is also a translational repressor protein, it controls the translation of the L11 operon by binding to its mRNA. In Clostridium botulinum (strain Alaska E43 / Type E3), this protein is Large ribosomal subunit protein uL1.